The primary structure comprises 96 residues: uncharacterized protein (96 aa).

The region spanning 57-96 is the CBS domain; sequence MTKKVRTTKKDASISDAAALMDKHNVNRLPVVDENNKLVL.

This is an uncharacterized protein from Methanobacterium ivanovii.